Reading from the N-terminus, the 328-residue chain is GATA transcription factor 17 (328 aa).

Positions M1–P68 are disordered. Low complexity predominate over residues R14–A29. Acidic residues-rich tracts occupy residues D30 to E39 and E47 to G63. Positions P100–G135 constitute a Tify domain. Residues R161–S203 form the CCT domain. A disordered region spans residues G198–P231. The GATA-type zinc-finger motif lies at C236–C263.

This sequence belongs to the type IV zinc-finger family. Class C subfamily.

It is found in the nucleus. Transcriptional activator that specifically binds 5'-GATA-3' or 5'-GAT-3' motifs within gene promoters. The polypeptide is GATA transcription factor 17 (Oryza sativa subsp. japonica (Rice)).